The following is a 911-amino-acid chain: DNA mismatch repair protein MutS (911 aa).

Residues 1 to 95 (MALQGNLFGD…PWSHHSQVTP (95 aa)) are disordered. Residues 23–42 (KRQDEPDQLDDHELTQDAKQ) show a composition bias toward basic and acidic residues. Residue 727–734 (GPNASGKS) coordinates ATP.

It belongs to the DNA mismatch repair MutS family.

Functionally, this protein is involved in the repair of mismatches in DNA. It is possible that it carries out the mismatch recognition step. This protein has a weak ATPase activity. The sequence is that of DNA mismatch repair protein MutS from Synechococcus sp. (strain CC9311).